A 183-amino-acid polypeptide reads, in one-letter code: Deoxyuridine 5'-triphosphate nucleotidohydrolase (183 aa).

Substrate contacts are provided by residues 67-69 (RSG), Asn-80, 84-86 (TID), and Lys-94. The tract at residues 138 to 183 (RAEGGFGSTGGHAGLDPASGTSGQVAEGGPTGGNRYASVVSDREGQ) is disordered. The span at 141–150 (GGFGSTGGHA) shows a compositional bias: gly residues.

This sequence belongs to the dUTPase family. The cofactor is Mg(2+).

It carries out the reaction dUTP + H2O = dUMP + diphosphate + H(+). The protein operates within pyrimidine metabolism; dUMP biosynthesis; dUMP from dCTP (dUTP route): step 2/2. Its function is as follows. This enzyme is involved in nucleotide metabolism: it produces dUMP, the immediate precursor of thymidine nucleotides and it decreases the intracellular concentration of dUTP so that uracil cannot be incorporated into DNA. This chain is Deoxyuridine 5'-triphosphate nucleotidohydrolase, found in Streptomyces coelicolor (strain ATCC BAA-471 / A3(2) / M145).